We begin with the raw amino-acid sequence, 170 residues long: Adenine phosphoribosyltransferase (170 aa).

This sequence belongs to the purine/pyrimidine phosphoribosyltransferase family. As to quaternary structure, homodimer.

Its subcellular location is the cytoplasm. It catalyses the reaction AMP + diphosphate = 5-phospho-alpha-D-ribose 1-diphosphate + adenine. The protein operates within purine metabolism; AMP biosynthesis via salvage pathway; AMP from adenine: step 1/1. In terms of biological role, catalyzes a salvage reaction resulting in the formation of AMP, that is energically less costly than de novo synthesis. The protein is Adenine phosphoribosyltransferase of Geobacillus kaustophilus (strain HTA426).